A 301-amino-acid chain; its full sequence is Acetylglutamate kinase (301 aa).

Residues 68–69, R90, and N195 each bind substrate; that span reads GG.

It belongs to the acetylglutamate kinase family. ArgB subfamily.

It localises to the cytoplasm. It catalyses the reaction N-acetyl-L-glutamate + ATP = N-acetyl-L-glutamyl 5-phosphate + ADP. It participates in amino-acid biosynthesis; L-arginine biosynthesis; N(2)-acetyl-L-ornithine from L-glutamate: step 2/4. Catalyzes the ATP-dependent phosphorylation of N-acetyl-L-glutamate. This Pseudomonas entomophila (strain L48) protein is Acetylglutamate kinase.